Here is an 86-residue protein sequence, read N- to C-terminus: Small ribosomal subunit protein bS20 (86 aa).

The segment covering 1-16 (MANIKSQEKRIRTNER) has biased composition (basic and acidic residues). Positions 1–25 (MANIKSQEKRIRTNERRRLRNQSVK) are disordered.

This sequence belongs to the bacterial ribosomal protein bS20 family.

In terms of biological role, binds directly to 16S ribosomal RNA. This Mycobacterium sp. (strain JLS) protein is Small ribosomal subunit protein bS20.